Reading from the N-terminus, the 103-residue chain is Acyl carrier protein homolog (103 aa).

The Carrier domain occupies 3–87; that stretch reads ELTSEIKKEI…ETLEKVVQTT (85 aa). The residue at position 45 (Ser-45) is an O-(pantetheine 4'-phosphoryl)serine.

4'-phosphopantetheine is transferred from CoA to a specific serine of the apo-ACP-like protein.

Its subcellular location is the cytoplasm. Functionally, acyl carrier protein. The sequence is that of Acyl carrier protein homolog from Clostridium acetobutylicum (strain ATCC 824 / DSM 792 / JCM 1419 / IAM 19013 / LMG 5710 / NBRC 13948 / NRRL B-527 / VKM B-1787 / 2291 / W).